Consider the following 312-residue polypeptide: tRNA dimethylallyltransferase (312 aa).

An ATP-binding site is contributed by 14-21 (GPTASGKS). 16 to 21 (TASGKS) serves as a coordination point for substrate. Interaction with substrate tRNA regions lie at residues 39-42 (DSSL) and 163-167 (QRLQR).

Belongs to the IPP transferase family. Monomer. Mg(2+) serves as cofactor.

It catalyses the reaction adenosine(37) in tRNA + dimethylallyl diphosphate = N(6)-dimethylallyladenosine(37) in tRNA + diphosphate. Functionally, catalyzes the transfer of a dimethylallyl group onto the adenine at position 37 in tRNAs that read codons beginning with uridine, leading to the formation of N6-(dimethylallyl)adenosine (i(6)A). The protein is tRNA dimethylallyltransferase of Methylococcus capsulatus (strain ATCC 33009 / NCIMB 11132 / Bath).